The primary structure comprises 539 residues: Chaperonin GroEL 1 (539 aa).

ATP contacts are provided by residues 29 to 32 (TLGP), 86 to 90 (DGTTT), Gly-413, and Asp-493.

Belongs to the chaperonin (HSP60) family. As to quaternary structure, forms a cylinder of 14 subunits composed of two heptameric rings stacked back-to-back. Interacts with the co-chaperonin GroES.

It localises to the cytoplasm. The enzyme catalyses ATP + H2O + a folded polypeptide = ADP + phosphate + an unfolded polypeptide.. Functionally, together with its co-chaperonin GroES, plays an essential role in assisting protein folding. The GroEL-GroES system forms a nano-cage that allows encapsulation of the non-native substrate proteins and provides a physical environment optimized to promote and accelerate protein folding. In Acidothermus cellulolyticus (strain ATCC 43068 / DSM 8971 / 11B), this protein is Chaperonin GroEL 1.